A 428-amino-acid chain; its full sequence is Adenylosuccinate synthetase (428 aa).

GTP-binding positions include 12 to 18 and 40 to 42; these read GDEGKGK and GHT. The Proton acceptor role is filled by aspartate 13. Mg(2+) is bound by residues aspartate 13 and glycine 40. IMP-binding positions include 13 to 16, 38 to 41, threonine 127, arginine 141, glutamine 222, threonine 237, and arginine 301; these read DEGK and NAGH. Residue histidine 41 is the Proton donor of the active site. 297 to 303 lines the substrate pocket; that stretch reads TVTKRPR. GTP is bound by residues arginine 303, 329–331, and 411–413; these read CLD and SVG.

This sequence belongs to the adenylosuccinate synthetase family. As to quaternary structure, homodimer. Mg(2+) serves as cofactor.

The protein resides in the cytoplasm. It carries out the reaction IMP + L-aspartate + GTP = N(6)-(1,2-dicarboxyethyl)-AMP + GDP + phosphate + 2 H(+). Its pathway is purine metabolism; AMP biosynthesis via de novo pathway; AMP from IMP: step 1/2. Plays an important role in the de novo pathway of purine nucleotide biosynthesis. Catalyzes the first committed step in the biosynthesis of AMP from IMP. This Levilactobacillus brevis (strain ATCC 367 / BCRC 12310 / CIP 105137 / JCM 1170 / LMG 11437 / NCIMB 947 / NCTC 947) (Lactobacillus brevis) protein is Adenylosuccinate synthetase.